The primary structure comprises 631 residues: Bromodomain-containing protein 9 (631 aa).

2 disordered regions span residues 1–26 (MGKKHKKYRPEWRAVEGDYEDKPLEK) and 39–116 (VTEL…TLPK). Basic and acidic residues-rich tracts occupy residues 9 to 26 (RPEWRAVEGDYEDKPLEK) and 50 to 63 (SYYDDRSDHEWERH). A compositionally biased stretch (basic residues) spans 64–73 (KEKKKKKKKK). Residues 74 to 85 (SEKEKYADDDER) show a composition bias toward basic and acidic residues. Basic residues predominate over residues 86–96 (RRRKEEKKKKR). The region spanning 166 to 270 (NEATPHQQLL…HTGFKMMSKQ (105 aa)) is the Bromo domain. A histone H4K5ac H4K8ac and histone H4K5bu H4K8bu binding region spans residues 244–246 (VYN). The segment at 571–631 (ASVDRVGSRP…SPEPGSTANS (61 aa)) is disordered. The span at 581–590 (SSNLSSLSNA) shows a compositional bias: low complexity.

In terms of assembly, binds acetylated histones H3 and H4. Binds butyrylated histone H4.

It is found in the nucleus. Plays a role in chromatin remodeling and regulation of transcription. Acts as a chromatin reader that recognizes and binds acylated histones: binds histones that are acetylated and/or butyrylated. The sequence is that of Bromodomain-containing protein 9 (brd9) from Danio rerio (Zebrafish).